Consider the following 201-residue polypeptide: ATP-dependent dethiobiotin synthetase BioD (201 aa).

11-16 is an ATP binding site; the sequence is DVGKTH. Mg(2+) is bound at residue Thr-15. Lys-31 is a catalytic residue. ATP contacts are provided by residues Asp-40 and 93 to 96; that span reads ELAG. Residues Asp-40 and Glu-93 each contribute to the Mg(2+) site.

It belongs to the dethiobiotin synthetase family. As to quaternary structure, homodimer. Mg(2+) is required as a cofactor.

Its subcellular location is the cytoplasm. It catalyses the reaction (7R,8S)-7,8-diammoniononanoate + CO2 + ATP = (4R,5S)-dethiobiotin + ADP + phosphate + 3 H(+). It participates in cofactor biosynthesis; biotin biosynthesis; biotin from 7,8-diaminononanoate: step 1/2. In terms of biological role, catalyzes a mechanistically unusual reaction, the ATP-dependent insertion of CO2 between the N7 and N8 nitrogen atoms of 7,8-diaminopelargonic acid (DAPA, also called 7,8-diammoniononanoate) to form a ureido ring. This is ATP-dependent dethiobiotin synthetase BioD from Campylobacter jejuni subsp. jejuni serotype O:6 (strain 81116 / NCTC 11828).